Here is a 913-residue protein sequence, read N- to C-terminus: DNA mismatch repair protein MutS (913 aa).

720–727 (GPNASGKS) is an ATP binding site.

This sequence belongs to the DNA mismatch repair MutS family.

Its function is as follows. This protein is involved in the repair of mismatches in DNA. It is possible that it carries out the mismatch recognition step. This protein has a weak ATPase activity. This is DNA mismatch repair protein MutS from Prochlorococcus marinus (strain MIT 9312).